We begin with the raw amino-acid sequence, 271 residues long: NH(3)-dependent NAD(+) synthetase (271 aa).

Residue 43 to 50 coordinates ATP; it reads GISGGQDS. Asp49 lines the Mg(2+) pocket. Arg137 is a binding site for deamido-NAD(+). Residue Thr157 coordinates ATP. Position 162 (Glu162) interacts with Mg(2+). Deamido-NAD(+) is bound by residues Lys170 and Asp177. ATP contacts are provided by Lys186 and Thr208. 257–258 contributes to the deamido-NAD(+) binding site; sequence HK.

The protein belongs to the NAD synthetase family. As to quaternary structure, homodimer.

It catalyses the reaction deamido-NAD(+) + NH4(+) + ATP = AMP + diphosphate + NAD(+) + H(+). It participates in cofactor biosynthesis; NAD(+) biosynthesis; NAD(+) from deamido-NAD(+) (ammonia route): step 1/1. Its function is as follows. Catalyzes the ATP-dependent amidation of deamido-NAD to form NAD. Uses ammonia as a nitrogen source. The polypeptide is NH(3)-dependent NAD(+) synthetase (Exiguobacterium sibiricum (strain DSM 17290 / CCUG 55495 / CIP 109462 / JCM 13490 / 255-15)).